Here is a 682-residue protein sequence, read N- to C-terminus: Activating transcription factor 7-interacting protein 2 (682 aa).

The tract at residues S120 to Q148 is disordered. The segment covering S137 to Q148 has biased composition (polar residues). Residues E328–V378 are a coiled coil. S416 is modified (phosphoserine). 2 stretches are compositionally biased toward polar residues: residues I418–S451 and E462–N490. 2 disordered regions span residues I418–A491 and N513–P538. Phosphoserine is present on residues S488 and S521. Positions K528–P538 are enriched in polar residues. The Fibronectin type-III domain maps to P575–N680.

It belongs to the MCAF family. In terms of assembly, interacts with MBD1, SETDB1 and SP1. Probably forms a complex with SETDB1 and MBD1.

It localises to the nucleus. Functionally, recruiter that couples transcriptional factors to general transcription apparatus and thereby modulates transcription regulation and chromatin formation. Can both act as an activator or a repressor depending on the context. Mediates MBD1-dependent transcriptional repression, probably by recruiting complexes containing SETDB1. The complex formed with MBD1 and SETDB1 represses transcription and probably couples DNA methylation and histone H3 'Lys-9' trimethylation (H3K9me3) activity. This is Activating transcription factor 7-interacting protein 2 (ATF7IP2) from Homo sapiens (Human).